The primary structure comprises 236 residues: Mammalian ependymin-related protein 1 (236 aa).

Residues methionine 1–methionine 35 form the signal peptide. 3 disulfide bridges follow: cysteine 54–cysteine 184, cysteine 100–cysteine 234, and cysteine 125–cysteine 222. N-linked (GlcNAc...) asparagine glycosylation is found at asparagine 142 and asparagine 194.

Belongs to the ependymin family. In terms of assembly, homodimer. N-glycosylated; the glycan contains mannose-6-phosphate moieties.

The protein localises to the lysosome lumen. Its subcellular location is the secreted. Functionally, binds anionic lipids and gangliosides at acidic pH. This is Mammalian ependymin-related protein 1 (EPDR1) from Bos taurus (Bovine).